The sequence spans 254 residues: 5-oxoprolinase subunit A (254 aa).

This sequence belongs to the LamB/PxpA family. In terms of assembly, forms a complex composed of PxpA, PxpB and PxpC.

The enzyme catalyses 5-oxo-L-proline + ATP + 2 H2O = L-glutamate + ADP + phosphate + H(+). Functionally, catalyzes the cleavage of 5-oxoproline to form L-glutamate coupled to the hydrolysis of ATP to ADP and inorganic phosphate. This chain is 5-oxoprolinase subunit A, found in Acinetobacter baumannii (strain ACICU).